Consider the following 317-residue polypeptide: NAD-dependent protein deacetylase Sirt6 (317 aa).

In terms of domain architecture, Deacetylase sirtuin-type spans 27-273 (DEVVAEKCQE…SKVCKLLGVE (247 aa)). Positions 53, 57, 64, 65, 71, 113, and 133 each coordinate NAD(+). The Proton acceptor role is filled by His133. 4 residues coordinate Zn(2+): Cys141, Cys144, Cys166, and Cys177. 4 residues coordinate NAD(+): Gly215, Asn241, Gln243, and Val259.

It belongs to the sirtuin family. Class IV subfamily. Zn(2+) is required as a cofactor. Widely expressed.

The protein resides in the nucleus. Its subcellular location is the chromosome. The catalysed reaction is N(6)-acetyl-L-lysyl-[protein] + NAD(+) + H2O = 2''-O-acetyl-ADP-D-ribose + nicotinamide + L-lysyl-[protein]. NAD-dependent histone deacylase that acts as a regulator of life span. This is NAD-dependent protein deacetylase Sirt6 from Drosophila melanogaster (Fruit fly).